Reading from the N-terminus, the 488-residue chain is Tyrosine-protein kinase Srms (488 aa).

The SH3 domain occupies 51-112 (PFPQLFLALY…PITHVAKASP (62 aa)). The 93-residue stretch at 120-212 (WYFSGVSRTQ…LIQNPLLQPC (93 aa)) folds into the SH2 domain. Residues 230-488 (FALGRKLGEG…KLHAIHRCHP (259 aa)) enclose the Protein kinase domain. Residues 236 to 244 (LGEGYFGEV) and Lys-258 contribute to the ATP site. Asp-350 serves as the catalytic Proton acceptor. Tyr-380 carries the post-translational modification Phosphotyrosine; by autocatalysis.

It belongs to the protein kinase superfamily. Tyr protein kinase family. SRC subfamily. Interacts (via the SH2 and SH3 domains) with DOK1. Interacts with KHDRBS1/SAM68 and VIM. Highly expressed in most breast cancers (at protein level).

Its subcellular location is the cytoplasm. It carries out the reaction L-tyrosyl-[protein] + ATP = O-phospho-L-tyrosyl-[protein] + ADP + H(+). Non-receptor tyrosine-protein kinase which phosphorylates DOK1 on tyrosine residues. Also phosphorylates KHDRBS1/SAM68 and VIM on tyrosine residues. Phosphorylation of KHDRBS1 is EGF-dependent. Phosphorylates OTUB1, promoting deubiquitination of RPTOR. The polypeptide is Tyrosine-protein kinase Srms (SRMS) (Homo sapiens (Human)).